The primary structure comprises 284 residues: Tropomyosin alpha-1 chain (284 aa).

The disordered stretch occupies residues 1-40 (MDAIKKKMQMLKLDKENALDRAEQAEADKKGAEDKSKQLE). A coiled-coil region spans residues 1–284 (MDAIKKKMQM…DHALNDMTSI (284 aa)). A compositionally biased stretch (basic and acidic residues) spans 12–40 (KLDKENALDRAEQAEADKKGAEDKSKQLE).

This sequence belongs to the tropomyosin family. In terms of assembly, homodimer. Heterodimer of an alpha (TPM1, TPM3 or TPM4) and a beta (TPM2) chain.

It localises to the cytoplasm. The protein resides in the cytoskeleton. In terms of biological role, binds to actin filaments in muscle and non-muscle cells. Plays a central role, in association with the troponin complex, in the calcium dependent regulation of vertebrate striated muscle contraction. Smooth muscle contraction is regulated by interaction with caldesmon. In non-muscle cells is implicated in stabilizing cytoskeleton actin filaments. The polypeptide is Tropomyosin alpha-1 chain (tpm1) (Rana temporaria (European common frog)).